The sequence spans 485 residues: MTIQHTQDLAQIRAMVPEMRRVKCIHFIGIGGAGMSGIAEVLLNEGYEITGSDLSENPVTERLVSKGATVFIGHQASNVEKASVVVVSTAINEENPEVMAARELRIPIVRRAEMLAELMRFRHGIAVAGTHGKTTTTALVTQIYSEAGLDPTFVNGGLVKSAGTNARLGSSRILIAEADESDASFLHLQPMVSIVTNIEADHMDTYGGDFETLKQTFIDFLHNLPFYGQAIVCIDDPVIRELIPRISRQVITYGFSDDADVRIENYHQEGQQGKFTVVRKGRANLDITLNIPGRHNALNASAAIAVATEDDIEDDAILKAMAGTQGTGRRFDHLGEFDTGNGHAMLVDDYGHHPTEVDVTIKAARSGWQDKRLVMIFQPHRYSRTRDLYDDFANVLEQVDVLIMLDVYAAGEKPIAGADGRSLCRTIRSRGKVDPIFVPEIEQLPSVLANVIQDGDLILTQGAGDVGKVAKQLANLELNINKMLG.

Residue 129–135 (GTHGKTT) participates in ATP binding.

This sequence belongs to the MurCDEF family.

The protein localises to the cytoplasm. It catalyses the reaction UDP-N-acetyl-alpha-D-muramate + L-alanine + ATP = UDP-N-acetyl-alpha-D-muramoyl-L-alanine + ADP + phosphate + H(+). It participates in cell wall biogenesis; peptidoglycan biosynthesis. Cell wall formation. This chain is UDP-N-acetylmuramate--L-alanine ligase, found in Vibrio parahaemolyticus serotype O3:K6 (strain RIMD 2210633).